Reading from the N-terminus, the 270-residue chain is tRNA pseudouridine synthase A (270 aa).

D51 functions as the Nucleophile in the catalytic mechanism. Position 109 (Y109) interacts with substrate.

This sequence belongs to the tRNA pseudouridine synthase TruA family. In terms of assembly, homodimer.

It catalyses the reaction uridine(38/39/40) in tRNA = pseudouridine(38/39/40) in tRNA. Its function is as follows. Formation of pseudouridine at positions 38, 39 and 40 in the anticodon stem and loop of transfer RNAs. The protein is tRNA pseudouridine synthase A of Burkholderia orbicola (strain MC0-3).